Reading from the N-terminus, the 556-residue chain is Formate--tetrahydrofolate ligase (556 aa).

65 to 72 (TPAGEGKS) serves as a coordination point for ATP.

It belongs to the formate--tetrahydrofolate ligase family.

The enzyme catalyses (6S)-5,6,7,8-tetrahydrofolate + formate + ATP = (6R)-10-formyltetrahydrofolate + ADP + phosphate. The protein operates within one-carbon metabolism; tetrahydrofolate interconversion. In Streptococcus uberis (strain ATCC BAA-854 / 0140J), this protein is Formate--tetrahydrofolate ligase.